The chain runs to 709 residues: Probable lanosterol 14-alpha demethylase (709 aa).

Cys-425 serves as a coordination point for heme.

This sequence belongs to the cytochrome P450 family. Heme serves as cofactor.

The protein localises to the membrane. It catalyses the reaction a 14alpha-methyl steroid + 3 reduced [NADPH--hemoprotein reductase] + 3 O2 = a Delta(14) steroid + formate + 3 oxidized [NADPH--hemoprotein reductase] + 4 H2O + 4 H(+). It functions in the pathway steroid biosynthesis; zymosterol biosynthesis; zymosterol from lanosterol: step 1/6. Catalyzes the 14-alpha demethylation of obtusifoliol to 4 alpha-methyl-5 alpha-ergosta-8,14,24(28)-trien-3 beta-ol. The sequence is that of Probable lanosterol 14-alpha demethylase from Acanthamoeba polyphaga (Amoeba).